A 631-amino-acid polypeptide reads, in one-letter code: Sperm-associated antigen 16 protein (631 aa).

Positions 152-267 (DVYTQIMLLE…LQETLKKLQR (116 aa)) form a coiled coil. A disordered region spans residues 266–332 (QRGHSYHGPQ…QPNPNLNVSK (67 aa)). 2 stretches are compositionally biased toward basic and acidic residues: residues 277–287 (KVDHSREKENA) and 295–304 (GLREAREQNK). WD repeat units follow at residues 350 to 389 (LHEL…VLLT), 392 to 431 (GHTD…CILT), 434 to 473 (GHSR…CRCT), 476 to 515 (GHTD…CEQS), 518 to 557 (GHMH…PIVS), 560 to 600 (IGPS…HKLM), and 601 to 630 (GHEN…VRTW).

In terms of assembly, interacts with SPAG6 and STK36. Post-translationally, phosphorylated by TSSK2. As to expression, isoform 1 is detected in testis. Isoform 4 is detected in testis and brain, and at lower levels in kidney, heart, pancreas, thyroid, ovary, adrenal gland, spinal cord, trachea and liver.

The protein resides in the cytoplasm. It is found in the cytoskeleton. Its subcellular location is the flagellum axoneme. It localises to the cilium axoneme. The protein localises to the cell projection. The protein resides in the cilium. It is found in the flagellum. In terms of biological role, necessary for sperm flagellar function. Plays a role in motile ciliogenesis. May help to recruit STK36 to the cilium or apical surface of the cell to initiate subsequent steps of construction of the central pair apparatus of motile cilia. The sequence is that of Sperm-associated antigen 16 protein (SPAG16) from Homo sapiens (Human).